Reading from the N-terminus, the 276-residue chain is uncharacterized protein (276 aa).

Residues M1–A29 form the signal peptide.

Belongs to the metallo-dependent hydrolases superfamily.

This is an uncharacterized protein from Haemophilus influenzae (strain ATCC 51907 / DSM 11121 / KW20 / Rd).